A 137-amino-acid chain; its full sequence is Nucleoside diphosphate kinase (137 aa).

ATP contacts are provided by Lys-9, Phe-57, Arg-85, Thr-91, Arg-102, and Asn-112. The active-site Pros-phosphohistidine intermediate is the His-115.

Belongs to the NDK family. Homotetramer. The cofactor is Mg(2+).

The protein localises to the cytoplasm. It catalyses the reaction a 2'-deoxyribonucleoside 5'-diphosphate + ATP = a 2'-deoxyribonucleoside 5'-triphosphate + ADP. The enzyme catalyses a ribonucleoside 5'-diphosphate + ATP = a ribonucleoside 5'-triphosphate + ADP. Major role in the synthesis of nucleoside triphosphates other than ATP. The ATP gamma phosphate is transferred to the NDP beta phosphate via a ping-pong mechanism, using a phosphorylated active-site intermediate. The protein is Nucleoside diphosphate kinase of Thermus thermophilus (strain ATCC BAA-163 / DSM 7039 / HB27).